Reading from the N-terminus, the 223-residue chain is Chalcone--flavanone isomerase (223 aa).

T50, N114, and T191 together coordinate substrate.

It belongs to the chalcone isomerase family.

The enzyme catalyses a chalcone = a flavanone.. It participates in secondary metabolite biosynthesis; flavonoid biosynthesis. Catalyzes the intramolecular cyclization of bicyclic chalcones into tricyclic (S)-flavanones. Responsible for the isomerization of 4,2',4',6'-tetrahydroxychalcone (also termed chalcone) into naringenin. The sequence is that of Chalcone--flavanone isomerase (CHI) from Pisum sativum (Garden pea).